Here is a 264-residue protein sequence, read N- to C-terminus: Meiotic recombination protein REC102 (264 aa).

It belongs to the TOP6B-like family. As to quaternary structure, interacts with REC104; seems to form a functional unit with REC104. REC102-REC104 interacts with SKI8-SPO11 and this interaction is required for proper subcellular location of the proteins during the initiation of recombination. Interacts with MEI4, REC114 and SPO11.

The protein resides in the nucleus. Functionally, required for formation of the SPO11-mediated double-strand breaks (DSBs) that initiate meiotic recombination. May mediate the interaction between SPO11 subunits during meiosis. Also needed for homolog chromosome pairing, synaptonemal complex formation, and for the proper timing of the first meiotic division. Not required for mitosis and mitotic DNA repair mechanisms. The chain is Meiotic recombination protein REC102 from Saccharomyces cerevisiae (strain ATCC 204508 / S288c) (Baker's yeast).